We begin with the raw amino-acid sequence, 368 residues long: Somatostatin receptor type 5 (368 aa).

Residues Met1–Pro45 lie on the Extracellular side of the membrane. Asn14 and Asn27 each carry an N-linked (GlcNAc...) asparagine glycan. The helical transmembrane segment at Val46–Val66 threads the bilayer. The Cytoplasmic segment spans residues Leu67–Asn77. Residues Ile78–Ala98 traverse the membrane as a helical segment. Topologically, residues Thr99–Leu115 are extracellular. A disulfide bridge links Cys113 with Cys188. The helical transmembrane segment at Val116–Val136 threads the bilayer. At Asp137–Lys158 the chain is on the cytoplasmic side. Residues Leu159–Ala179 traverse the membrane as a helical segment. Topologically, residues Asp180–Thr207 are extracellular. N-linked (GlcNAc...) asparagine glycosylation occurs at Asn189. The helical transmembrane segment at Ser208–Val228 threads the bilayer. Over Lys229 to Met251 the chain is Cytoplasmic. A helical transmembrane segment spans residues Val252–Val272. Topologically, residues Asn273–Gly286 are extracellular. Residues Ala287–Leu309 form a helical membrane-spanning segment. Residues Ser310 to Leu368 lie on the Cytoplasmic side of the membrane. Cys322 carries S-palmitoyl cysteine; by ZDHHC5 lipidation.

Belongs to the G-protein coupled receptor 1 family. Heterodimer with SSTR2. Heterodimerization with SSTR2 increases cell growth inhibition activity of SSTR2. Post-translationally, palmitoylated by ZDHHC5, but not ZDHHC3, nor ZDHHC8. Palmitoylation creates an additional intracellular loop which is thought to be important for efficient coupling to G-proteins and may target the protein to lipid rafts.

The protein resides in the cell membrane. Its function is as follows. Receptor for somatostatin 28 and to a lesser extent for somatostatin-14. The activity of this receptor is mediated by G proteins which inhibit adenylyl cyclase. Increases cell growth inhibition activity of SSTR2 following heterodimerization. The sequence is that of Somatostatin receptor type 5 (SSTR5) from Bos taurus (Bovine).